The following is a 366-amino-acid chain: DNA replication and repair protein RecF (366 aa).

30-37 is a binding site for ATP; it reads GDNGMGKT.

It belongs to the RecF family.

The protein resides in the cytoplasm. Functionally, the RecF protein is involved in DNA metabolism; it is required for DNA replication and normal SOS inducibility. RecF binds preferentially to single-stranded, linear DNA. It also seems to bind ATP. The polypeptide is DNA replication and repair protein RecF (Azobacteroides pseudotrichonymphae genomovar. CFP2).